A 244-amino-acid polypeptide reads, in one-letter code: Myosin-7 (244 aa).

A rodlike tail (S2 and LMM domains) region spans residues Val1–Glu244. Residues Val1–Glu244 are a coiled coil. The segment at Glu216–Glu244 is disordered. Over residues Lys232–Glu244 the composition is skewed to basic and acidic residues.

Muscle myosin is a hexameric protein that consists of 2 heavy chain subunits (MHC), 2 alkali light chain subunits (MLC) and 2 regulatory light chain subunits (MLC-2). Interacts with ECPAS. Interacts (via C-terminus) with LRRC39.

The protein localises to the cytoplasm. Its subcellular location is the myofibril. It is found in the sarcomere. Myosins are actin-based motor molecules with ATPase activity essential for muscle contraction. Forms regular bipolar thick filaments that, together with actin thin filaments, constitute the fundamental contractile unit of skeletal and cardiac muscle. The sequence is that of Myosin-7 (MYH7) from Papio hamadryas (Hamadryas baboon).